We begin with the raw amino-acid sequence, 261 residues long: Prostate-specific antigen (261 aa).

Positions Met1–Ala17 are cleaved as a signal peptide. Positions Ala18–Arg24 are cleaved as a propeptide — activation peptide. In terms of domain architecture, Peptidase S1 spans Ile25 to Val258. 5 disulfide bridges follow: Cys31/Cys173, Cys50/Cys66, Cys152/Cys219, Cys184/Cys198, and Cys209/Cys234. Catalysis depends on His65, which acts as the Charge relay system. N-linked (GlcNAc...) asparagine glycosylation is present at Asn69. Residue Asp120 is the Charge relay system of the active site. Ser213 acts as the Charge relay system in catalysis.

Belongs to the peptidase S1 family. Kallikrein subfamily. In terms of assembly, forms a heterodimer with SERPINA5.

The protein resides in the secreted. It catalyses the reaction Preferential cleavage: -Tyr-|-Xaa-.. With respect to regulation, inhibited by SERPINA5. Activity is strongly inhibited by Zn2+, 100 times more abundant in semen than in serum. This inhibition is relieved by exposure to semenogelins, which are avid zinc binders. Its function is as follows. Hydrolyzes semenogelin-1 thus leading to the liquefaction of the seminal coagulum. The polypeptide is Prostate-specific antigen (KLK3) (Homo sapiens (Human)).